A 106-amino-acid chain; its full sequence is Large ribosomal subunit protein uL24 (106 aa).

It belongs to the universal ribosomal protein uL24 family. In terms of assembly, part of the 50S ribosomal subunit.

Functionally, one of two assembly initiator proteins, it binds directly to the 5'-end of the 23S rRNA, where it nucleates assembly of the 50S subunit. In terms of biological role, one of the proteins that surrounds the polypeptide exit tunnel on the outside of the subunit. The chain is Large ribosomal subunit protein uL24 from Polaromonas naphthalenivorans (strain CJ2).